The chain runs to 103 residues: Small ribosomal subunit protein uS10 (103 aa).

Belongs to the universal ribosomal protein uS10 family. In terms of assembly, part of the 30S ribosomal subunit.

Its function is as follows. Involved in the binding of tRNA to the ribosomes. In Polynucleobacter necessarius subsp. necessarius (strain STIR1), this protein is Small ribosomal subunit protein uS10.